The primary structure comprises 88 residues: Small ribosomal subunit protein bS20 (88 aa).

The protein belongs to the bacterial ribosomal protein bS20 family.

In terms of biological role, binds directly to 16S ribosomal RNA. This chain is Small ribosomal subunit protein bS20, found in Blochmanniella floridana.